The following is a 534-amino-acid chain: MKQKFIFVTGGVVSSIGKGLTAASLGALLEGRGHKVTIMKFDPYLNVDPGTMSPLQHGEVYVTEDGAETDLDLGHYERFTSALMNRSNSVSTGQIYDTVLNRERRGDYLGGTVQVIPHITEEIKARIYEAAQGSEIILVEIGGTVGDIESQPFLEAIRQMRIDVGQENSVLVHVTYVPYIAAAGELKSKPTQHSVKELREIGLQPDFLVCRSEKVIDDNLKAKIGLFCSVKPENVIAAQDSRFIYEVPLALHREKLDELIVARLGLSAGKLNMKGWQNLVKILGNPSHTVKIGVVGKYVDLKESYKSLHEALVHGGVANNARVEIIYVDSEKVTDKTVHSLLGKVDGILVPGGFGTRGVEGKITAIKYAREKRVPFFGICFGMQLSAIEFARNVCGIKDATSREFHAENKRTGNFVIDSMAEQRGVINKGGTMRLGAFPCAIASGSRAYQVYKASSIMERHRHRFEFNNKYKDLFEKNGMMASGICKERDLVEIVELPDHPWFVGVQFHPEFKSKPLAPHPLFVHFVKASLKKK.

An amidoligase domain region spans residues 1–266 (MKQKFIFVTG…DELIVARLGL (266 aa)). Ser14 contributes to the CTP binding site. Ser14 contacts UTP. Residues 15-20 (SIGKGL) and Asp72 contribute to the ATP site. Mg(2+) is bound by residues Asp72 and Glu140. CTP-binding positions include 147-149 (DIE), 187-192 (KSKPTQ), and Lys223. UTP is bound by residues 187–192 (KSKPTQ) and Lys223. Positions 291-534 (KIGVVGKYVD…HFVKASLKKK (244 aa)) constitute a Glutamine amidotransferase type-1 domain. L-glutamine is bound at residue Gly353. Cys380 functions as the Nucleophile; for glutamine hydrolysis in the catalytic mechanism. L-glutamine-binding positions include 381–384 (FGMQ), Glu404, and Arg464. Active-site residues include His509 and Glu511.

The protein belongs to the CTP synthase family. As to quaternary structure, homotetramer.

It carries out the reaction UTP + L-glutamine + ATP + H2O = CTP + L-glutamate + ADP + phosphate + 2 H(+). It catalyses the reaction L-glutamine + H2O = L-glutamate + NH4(+). The enzyme catalyses UTP + NH4(+) + ATP = CTP + ADP + phosphate + 2 H(+). Its pathway is pyrimidine metabolism; CTP biosynthesis via de novo pathway; CTP from UDP: step 2/2. Allosterically activated by GTP, when glutamine is the substrate; GTP has no effect on the reaction when ammonia is the substrate. The allosteric effector GTP functions by stabilizing the protein conformation that binds the tetrahedral intermediate(s) formed during glutamine hydrolysis. Inhibited by the product CTP, via allosteric rather than competitive inhibition. In terms of biological role, catalyzes the ATP-dependent amination of UTP to CTP with either L-glutamine or ammonia as the source of nitrogen. Regulates intracellular CTP levels through interactions with the four ribonucleotide triphosphates. The polypeptide is CTP synthase (Bdellovibrio bacteriovorus (strain ATCC 15356 / DSM 50701 / NCIMB 9529 / HD100)).